We begin with the raw amino-acid sequence, 63 residues long: Large ribosomal subunit protein uL30 (63 aa).

Belongs to the universal ribosomal protein uL30 family. As to quaternary structure, part of the 50S ribosomal subunit.

The chain is Large ribosomal subunit protein uL30 from Natranaerobius thermophilus (strain ATCC BAA-1301 / DSM 18059 / JW/NM-WN-LF).